Consider the following 251-residue polypeptide: Large ribosomal subunit protein uL16m (251 aa).

A mitochondrion-targeting transit peptide spans 1-29 (MWRLLTRVPAPLLRMHFSDSWAALPTSAG).

The protein belongs to the universal ribosomal protein uL16 family. Component of the mitochondrial ribosome large subunit (39S) which comprises a 16S rRNA and about 50 distinct proteins.

It is found in the mitochondrion. The sequence is that of Large ribosomal subunit protein uL16m (Mrpl16) from Mus musculus (Mouse).